A 532-amino-acid chain; its full sequence is Phosphoenolpyruvate carboxylase (532 aa).

This sequence belongs to the PEPCase type 2 family. In terms of assembly, homotetramer. Requires Mg(2+) as cofactor.

It carries out the reaction oxaloacetate + phosphate = phosphoenolpyruvate + hydrogencarbonate. Its function is as follows. Catalyzes the irreversible beta-carboxylation of phosphoenolpyruvate (PEP) to form oxaloacetate (OAA), a four-carbon dicarboxylic acid source for the tricarboxylic acid cycle. The sequence is that of Phosphoenolpyruvate carboxylase from Methanopyrus kandleri (strain AV19 / DSM 6324 / JCM 9639 / NBRC 100938).